Here is a 562-residue protein sequence, read N- to C-terminus: Glutamine--tRNA ligase (562 aa).

The 'HIGH' region motif lies at 35-45 (PEPNGYLHIGH). ATP-binding positions include 36-38 (EPN) and 42-48 (HIGHAKS). Residues Asp-68 and Tyr-213 each contribute to the L-glutamine site. ATP-binding positions include Thr-232 and 264–265 (RL). Positions 271–275 (ITSKR) match the 'KMSKS' region motif.

The protein belongs to the class-I aminoacyl-tRNA synthetase family. In terms of assembly, monomer.

Its subcellular location is the cytoplasm. The catalysed reaction is tRNA(Gln) + L-glutamine + ATP = L-glutaminyl-tRNA(Gln) + AMP + diphosphate. The sequence is that of Glutamine--tRNA ligase from Neisseria meningitidis serogroup A / serotype 4A (strain DSM 15465 / Z2491).